The primary structure comprises 417 residues: Peptidyl-Asp metalloendopeptidase (417 aa).

The N-terminal stretch at 1–23 (MKSKSMCTTVGLIAMCLAGSAAA) is a signal peptide. H331 lines the Zn(2+) pocket. E332 is an active-site residue. Zn(2+) is bound by residues H335 and H341.

It belongs to the peptidase M72 family. Zn(2+) serves as cofactor.

The enzyme catalyses Cleavage of Xaa-|-Asp, Xaa-|-Glu and Xaa-|-cysteic acid bonds.. Functionally, metalloprotease, specifically cleaves on the N-terminal side of aspartyl, glutamyl and cysteic acid residues. This chain is Peptidyl-Asp metalloendopeptidase, found in Xanthomonas campestris pv. campestris (strain ATCC 33913 / DSM 3586 / NCPPB 528 / LMG 568 / P 25).